The sequence spans 499 residues: Phenylalanine--tRNA ligase alpha subunit (499 aa).

Residues Thr-330, 372 to 374, and Tyr-412 each bind L-phenylalanine; that span reads QVE. Glu-414 is a binding site for Mg(2+). An L-phenylalanine-binding site is contributed by Phe-438.

This sequence belongs to the class-II aminoacyl-tRNA synthetase family. Phe-tRNA synthetase alpha subunit type 2 subfamily. In terms of assembly, tetramer of two alpha and two beta subunits. Mg(2+) serves as cofactor.

The protein resides in the cytoplasm. The enzyme catalyses tRNA(Phe) + L-phenylalanine + ATP = L-phenylalanyl-tRNA(Phe) + AMP + diphosphate + H(+). The chain is Phenylalanine--tRNA ligase alpha subunit (frs2) from Schizosaccharomyces pombe (strain 972 / ATCC 24843) (Fission yeast).